Consider the following 178-residue polypeptide: ATP synthase subunit delta (178 aa).

It belongs to the ATPase delta chain family. F-type ATPases have 2 components, F(1) - the catalytic core - and F(0) - the membrane proton channel. F(1) has five subunits: alpha(3), beta(3), gamma(1), delta(1), epsilon(1). F(0) has three main subunits: a(1), b(2) and c(10-14). The alpha and beta chains form an alternating ring which encloses part of the gamma chain. F(1) is attached to F(0) by a central stalk formed by the gamma and epsilon chains, while a peripheral stalk is formed by the delta and b chains.

Its subcellular location is the cell membrane. In terms of biological role, f(1)F(0) ATP synthase produces ATP from ADP in the presence of a proton or sodium gradient. F-type ATPases consist of two structural domains, F(1) containing the extramembraneous catalytic core and F(0) containing the membrane proton channel, linked together by a central stalk and a peripheral stalk. During catalysis, ATP synthesis in the catalytic domain of F(1) is coupled via a rotary mechanism of the central stalk subunits to proton translocation. Functionally, this protein is part of the stalk that links CF(0) to CF(1). It either transmits conformational changes from CF(0) to CF(1) or is implicated in proton conduction. The protein is ATP synthase subunit delta of Desulfitobacterium hafniense (strain Y51).